Consider the following 115-residue polypeptide: Large ribosomal subunit protein bL19 (115 aa).

The protein belongs to the bacterial ribosomal protein bL19 family.

Functionally, this protein is located at the 30S-50S ribosomal subunit interface and may play a role in the structure and function of the aminoacyl-tRNA binding site. The protein is Large ribosomal subunit protein bL19 of Alkaliphilus oremlandii (strain OhILAs) (Clostridium oremlandii (strain OhILAs)).